We begin with the raw amino-acid sequence, 84 residues long: Small ribosomal subunit protein uS17 (84 aa).

Belongs to the universal ribosomal protein uS17 family. As to quaternary structure, part of the 30S ribosomal subunit.

In terms of biological role, one of the primary rRNA binding proteins, it binds specifically to the 5'-end of 16S ribosomal RNA. In Clostridium botulinum (strain ATCC 19397 / Type A), this protein is Small ribosomal subunit protein uS17.